The primary structure comprises 178 residues: MAEKITIARPYANAVFELAQAQKNYDQWSRVLNVFADLARDSEMQILIDDPRYTSEQLIGLFVEIGGDTVTESAKNFIKILADNRRLSVLPEVAALFEQLRAEIEGTLEVEIISAKPLAEEQLNEIASALKRRLGREVTFSRKTDESLLGGVIIRAGDLVIDGSAIGKLNQLAASLLH.

The protein belongs to the ATPase delta chain family. In terms of assembly, F-type ATPases have 2 components, F(1) - the catalytic core - and F(0) - the membrane proton channel. F(1) has five subunits: alpha(3), beta(3), gamma(1), delta(1), epsilon(1). F(0) has three main subunits: a(1), b(2) and c(10-14). The alpha and beta chains form an alternating ring which encloses part of the gamma chain. F(1) is attached to F(0) by a central stalk formed by the gamma and epsilon chains, while a peripheral stalk is formed by the delta and b chains.

The protein resides in the cell inner membrane. Its function is as follows. F(1)F(0) ATP synthase produces ATP from ADP in the presence of a proton or sodium gradient. F-type ATPases consist of two structural domains, F(1) containing the extramembraneous catalytic core and F(0) containing the membrane proton channel, linked together by a central stalk and a peripheral stalk. During catalysis, ATP synthesis in the catalytic domain of F(1) is coupled via a rotary mechanism of the central stalk subunits to proton translocation. Functionally, this protein is part of the stalk that links CF(0) to CF(1). It either transmits conformational changes from CF(0) to CF(1) or is implicated in proton conduction. This Nitrosococcus oceani (strain ATCC 19707 / BCRC 17464 / JCM 30415 / NCIMB 11848 / C-107) protein is ATP synthase subunit delta.